Here is a 281-residue protein sequence, read N- to C-terminus: MNQERLIAAEDITFRYQKDADRPALDHVSFHVSKGEWLAIVGHNGSGKSTLARALNGLILPDEGSIKVGGIKLTEETVWDVRKKVGMVFQNPDNQFVGTTVRDDVAFGLENSGVPREDMVERVDWAVQQVNMQEFLDQEPHHLSGGQKQRVAIAGVLAARPDIMILDEATSMLDPMGREEVLDTVRRLKDQGMVTVISITHDLNEAAKADRIIVMNSGRKFAEGTPQEVFRLNQDLIKIGLDLPFSFQLTQMLKESGLALKGDHLTQEGLVNELWTLKSKM.

The 236-residue stretch at 7–242 (IAAEDITFRY…NQDLIKIGLD (236 aa)) folds into the ABC transporter domain. 42–49 (GHNGSGKS) lines the ATP pocket.

This sequence belongs to the ABC transporter superfamily. Energy-coupling factor EcfA family. As to quaternary structure, forms a stable energy-coupling factor (ECF) transporter complex composed of 2 membrane-embedded substrate-binding proteins (S component), 2 ATP-binding proteins (A component) and 2 transmembrane proteins (T component).

Its subcellular location is the cell membrane. Functionally, ATP-binding (A) component of a common energy-coupling factor (ECF) ABC-transporter complex. Unlike classic ABC transporters this ECF transporter provides the energy necessary to transport a number of different substrates. This chain is Energy-coupling factor transporter ATP-binding protein EcfA1, found in Bacillus licheniformis (strain ATCC 14580 / DSM 13 / JCM 2505 / CCUG 7422 / NBRC 12200 / NCIMB 9375 / NCTC 10341 / NRRL NRS-1264 / Gibson 46).